The primary structure comprises 444 residues: 23S rRNA (uracil(1939)-C(5))-methyltransferase RlmD (444 aa).

The 63-residue stretch at 5 to 67 (RNRFDRTPFQ…RHFDEAKTVE (63 aa)) folds into the TRAM domain. [4Fe-4S] cluster contacts are provided by C80, C86, C89, and C168. Q276, F305, N310, E326, D353, and D374 together coordinate S-adenosyl-L-methionine. C400 serves as the catalytic Nucleophile.

Belongs to the class I-like SAM-binding methyltransferase superfamily. RNA M5U methyltransferase family. RlmD subfamily.

The enzyme catalyses uridine(1939) in 23S rRNA + S-adenosyl-L-methionine = 5-methyluridine(1939) in 23S rRNA + S-adenosyl-L-homocysteine + H(+). Its function is as follows. Catalyzes the formation of 5-methyl-uridine at position 1939 (m5U1939) in 23S rRNA. In Xanthomonas oryzae pv. oryzae (strain KACC10331 / KXO85), this protein is 23S rRNA (uracil(1939)-C(5))-methyltransferase RlmD.